Reading from the N-terminus, the 174-residue chain is Peptide deformylase (174 aa).

Cys96 and His138 together coordinate Fe cation. Glu139 is a catalytic residue. A Fe cation-binding site is contributed by His142.

The protein belongs to the polypeptide deformylase family. It depends on Fe(2+) as a cofactor.

It catalyses the reaction N-terminal N-formyl-L-methionyl-[peptide] + H2O = N-terminal L-methionyl-[peptide] + formate. Functionally, removes the formyl group from the N-terminal Met of newly synthesized proteins. Requires at least a dipeptide for an efficient rate of reaction. N-terminal L-methionine is a prerequisite for activity but the enzyme has broad specificity at other positions. The protein is Peptide deformylase of Helicobacter pylori (strain G27).